An 89-amino-acid chain; its full sequence is MSEGDSMKMVIRPRHMISLGGYIVELEFPYRNLIVVNPTDEHIKIEVPVFDEEWIEEHRKLGLKIVPVGDDDNYLSLWRREKALLEASD.

The protein to M.jannaschii MJ1436.

This is an uncharacterized protein from Methanothermobacter thermautotrophicus (strain ATCC 29096 / DSM 1053 / JCM 10044 / NBRC 100330 / Delta H) (Methanobacterium thermoautotrophicum).